Consider the following 152-residue polypeptide: Neuropeptide W (152 aa).

Residues 1–32 (MGARGPGPGATARRRLLALLLLLLLLPLPARA) form the signal peptide. A propeptide spanning residues 65–152 (ALRPAAGPLA…LGASSWTSAE (88 aa)) is cleaved from the precursor. 2 disordered regions span residues 79 to 108 (GQDVPPRGPSARNALSPGPAPRDAPLLPPG) and 122 to 152 (SGIPVSAPRSPRARGSEPQPELGASSWTSAE). The segment covering 96–106 (GPAPRDAPLLP) has biased composition (pro residues).

This sequence belongs to the neuropeptide B/W family.

It localises to the secreted. Functionally, plays a regulatory role in the organization of neuroendocrine signals accessing the anterior pituitary gland. Stimulates water drinking and food intake. May play a role in the hypothalamic response to stress. The sequence is that of Neuropeptide W (NPW) from Sus scrofa (Pig).